Consider the following 274-residue polypeptide: Undecaprenyl-diphosphatase 2 (274 aa).

6 helical membrane passes run 47–64 (VFVI…CWEY), 82–102 (WKFV…GLTF), 110–130 (LFSP…ILWA), 185–205 (ATEF…LYDL), 219–239 (LMAV…RGLI), and 249–269 (VFAW…WSGL).

The protein belongs to the UppP family.

It is found in the cell inner membrane. The enzyme catalyses di-trans,octa-cis-undecaprenyl diphosphate + H2O = di-trans,octa-cis-undecaprenyl phosphate + phosphate + H(+). Catalyzes the dephosphorylation of undecaprenyl diphosphate (UPP). Confers resistance to bacitracin. The chain is Undecaprenyl-diphosphatase 2 from Rhodospirillum rubrum (strain ATCC 11170 / ATH 1.1.1 / DSM 467 / LMG 4362 / NCIMB 8255 / S1).